We begin with the raw amino-acid sequence, 420 residues long: Transcriptional adapter 2-beta (420 aa).

The segment at 4 to 59 (LSKKYCVYCLADVTSLRLRCTECQDIELCTDCFSAGAEIGNHRRWHGYQLVDGGRF) adopts a ZZ-type zinc-finger fold. Positions 9, 12, 23, 26, 32, 35, 45, and 49 each coordinate Zn(2+). One can recognise an SANT domain in the interval 65–118 (EAEGGWTSREEQLLLDAIEQFGFGNWEDMAAHVGASRTPTEVMEHYVTMYIHGN). Residues 303–333 (EESAEYEAARHKREKRKENKNIANSKRGRED) are disordered.

The protein localises to the nucleus. Its function is as follows. Transcriptional coactivator. The sequence is that of Transcriptional adapter 2-beta (tada2b) from Xenopus laevis (African clawed frog).